A 257-amino-acid chain; its full sequence is Large ribosomal subunit protein eL8z (257 aa).

This sequence belongs to the eukaryotic ribosomal protein eL8 family.

In Arabidopsis thaliana (Mouse-ear cress), this protein is Large ribosomal subunit protein eL8z (RPL7AA).